Consider the following 960-residue polypeptide: Glycine dehydrogenase (decarboxylating) (960 aa).

Lys709 is subject to N6-(pyridoxal phosphate)lysine.

This sequence belongs to the GcvP family. The glycine cleavage system is composed of four proteins: P, T, L and H. The cofactor is pyridoxal 5'-phosphate.

It catalyses the reaction N(6)-[(R)-lipoyl]-L-lysyl-[glycine-cleavage complex H protein] + glycine + H(+) = N(6)-[(R)-S(8)-aminomethyldihydrolipoyl]-L-lysyl-[glycine-cleavage complex H protein] + CO2. Its function is as follows. The glycine cleavage system catalyzes the degradation of glycine. The P protein binds the alpha-amino group of glycine through its pyridoxal phosphate cofactor; CO(2) is released and the remaining methylamine moiety is then transferred to the lipoamide cofactor of the H protein. This Hahella chejuensis (strain KCTC 2396) protein is Glycine dehydrogenase (decarboxylating).